The following is a 236-amino-acid chain: MGRRYWNINLEEMMEAGIHFGHVTNKWNPRMAPYISSKRKGIHITNLTITARFLSEACDLVFDAASRGKRFLIVGTKKKAADLVASAAIKARCHYVNKKWLGGMLTNWSTTETRLQKFRDLRAEQKMGKLNRLPKGDAAMLKRKLSTLQAYLGGIKYMTGLPDIVIIVDQQEEYTVLRECVILGIPTICLIDTNCDPDLADISIPANDDAIASIRLILTKLVSAICEGHSSYIKKG.

Belongs to the universal ribosomal protein uS2 family.

It is found in the plastid. Its subcellular location is the chloroplast. The polypeptide is Small ribosomal subunit protein uS2c (rps2) (Phalaenopsis aphrodite subsp. formosana (Moth orchid)).